Here is a 466-residue protein sequence, read N- to C-terminus: Uronate isomerase (466 aa).

Belongs to the metallo-dependent hydrolases superfamily. Uronate isomerase family.

It catalyses the reaction D-glucuronate = D-fructuronate. It carries out the reaction aldehydo-D-galacturonate = keto-D-tagaturonate. It functions in the pathway carbohydrate metabolism; pentose and glucuronate interconversion. The sequence is that of Uronate isomerase from Streptococcus agalactiae serotype III (strain NEM316).